Here is a 388-residue protein sequence, read N- to C-terminus: Mannitol-1-phosphate 5-dehydrogenase (388 aa).

Residue 5 to 16 participates in NAD(+) binding; it reads AVHFGGGNIGRG. K213 is a catalytic residue.

Belongs to the mannitol dehydrogenase family. As to quaternary structure, monomer.

The enzyme catalyses D-mannitol 1-phosphate + NAD(+) = beta-D-fructose 6-phosphate + NADH + H(+). Catalyzes the NAD(H)-dependent interconversion of D-fructose 6-phosphate and D-mannitol 1-phosphate in the mannitol metabolic pathway. This chain is Mannitol-1-phosphate 5-dehydrogenase, found in Coccidioides immitis (strain RS) (Valley fever fungus).